The primary structure comprises 112 residues: 87 kDa annexin-binding protein (112 aa).

Binds annexin.

The protein is 87 kDa annexin-binding protein of Physarum polycephalum (Slime mold).